The sequence spans 280 residues: Hydroxyethylthiazole kinase (280 aa).

Residue M50 participates in substrate binding. ATP-binding residues include K125 and T178. Position 205 (G205) interacts with substrate.

Belongs to the Thz kinase family. Mg(2+) serves as cofactor.

It carries out the reaction 5-(2-hydroxyethyl)-4-methylthiazole + ATP = 4-methyl-5-(2-phosphooxyethyl)-thiazole + ADP + H(+). It participates in cofactor biosynthesis; thiamine diphosphate biosynthesis; 4-methyl-5-(2-phosphoethyl)-thiazole from 5-(2-hydroxyethyl)-4-methylthiazole: step 1/1. In terms of biological role, catalyzes the phosphorylation of the hydroxyl group of 4-methyl-5-beta-hydroxyethylthiazole (THZ). The protein is Hydroxyethylthiazole kinase of Lacticaseibacillus casei (strain BL23) (Lactobacillus casei).